The primary structure comprises 862 residues: Protein translocase subunit SecA (862 aa).

ATP-binding positions include glutamine 88, 106 to 110, and aspartate 506; that span reads GEGKT. Zn(2+) is bound by residues cysteine 839, cysteine 841, cysteine 850, and histidine 851.

It belongs to the SecA family. In terms of assembly, monomer and homodimer. Part of the essential Sec protein translocation apparatus which comprises SecA, SecYEG and auxiliary proteins SecDF-YajC and YidC. Zn(2+) serves as cofactor.

The protein localises to the cell inner membrane. It localises to the cytoplasm. The enzyme catalyses ATP + H2O + cellular proteinSide 1 = ADP + phosphate + cellular proteinSide 2.. Part of the Sec protein translocase complex. Interacts with the SecYEG preprotein conducting channel. Has a central role in coupling the hydrolysis of ATP to the transfer of proteins into and across the cell membrane, serving as an ATP-driven molecular motor driving the stepwise translocation of polypeptide chains across the membrane. The polypeptide is Protein translocase subunit SecA (Campylobacter jejuni (strain RM1221)).